The primary structure comprises 98 residues: UPF0358 protein LCA_1078 (98 aa).

Belongs to the UPF0358 family.

This is UPF0358 protein LCA_1078 from Latilactobacillus sakei subsp. sakei (strain 23K) (Lactobacillus sakei subsp. sakei).